Here is a 499-residue protein sequence, read N- to C-terminus: Protein-cysteine N-palmitoyltransferase HHAT (499 aa).

Residues 1–5 (MLPGW) lie on the Cytoplasmic side of the membrane. Residues 6–22 (ELTLCLLVSLGFHFRSF) traverse the membrane as a helical segment. Residues 23–67 (YEVYKVSREHEEELDQEFELEMDTLFGGLKKDPTDFEWNFWMEWG) are Lumenal-facing. A helical membrane pass occupies residues 68–84 (KRRLVWLFIGHMAVSQL). Residues 85–94 (ATLLTKKHRP) are Cytoplasmic-facing. Residues 91–155 (KHRPWIVMVY…TLRLQSVEEV (65 aa)) form an essential for palmitoylation of SHH region. An intramembrane segment occupies 95–119 (WIVMVYGMWACWCVLGAPGVVMVLL). Residues 120 to 131 (HSTIAFCVAQFR) are Cytoplasmic-facing. Residues 132 to 148 (SVLLSWLCSLLLLSTLR) traverse the membrane as a helical segment. Residues 149 to 162 (LQSVEEVKRRWYKT) are Lumenal-facing. A helical membrane pass occupies residues 163-183 (ENEYYLLQFTLTVRCLYYTSF). Over 184-208 (SLELCRQPPSAQPTPSAQGASHSYP) the chain is Cytoplasmic. A lipid anchor (S-palmitoyl cysteine) is attached at Cys-188. The stretch at 209-223 (WLLTYVFYYPVFHNG) is an intramembrane region. At 224–249 (PILNFPEFFRQMQQPELNSLQHSLCI) the chain is on the cytoplasmic side. A lipid anchor (S-palmitoyl cysteine) is attached at Cys-248. A helical transmembrane segment spans residues 250–277 (VAKGLGRLLCWWWLAELMVHLMYMHALY). Residues 278–287 (SSAPLLESVS) are Lumenal-facing. Residues 288–316 (CWTLGGLALAQVLFFYVKYLVLFGVPALL) form a helical membrane-spanning segment. At 317-369 (MRLDGLTPPPLPRCVSTMFSFTGMWRYFDVGLHNFLIRYVYIPLGGSQHGLLG) the chain is on the cytoplasmic side. A lipid anchor (S-palmitoyl cysteine) is attached at Cys-330. The helical transmembrane segment at 370–386 (TLLSTATTFAFVSYWHG) threads the bilayer. His-385 is an active-site residue. Topologically, residues 387–389 (SYE) are lumenal. The chain crosses the membrane as a helical span at residues 390–405 (DLWCWAALNWLGVTVE). The Cytoplasmic portion of the chain corresponds to 406-433 (SGVRRLLETPCVRETLARHLSPQAHHRL). Cys-416 carries the S-palmitoyl cysteine lipid modification. The chain crosses the membrane as a helical span at residues 434-454 (HALLAACSTSMLILFNLVFLG). 454 to 461 (GGIQVGKT) is a binding site for GTP. Residues 455–468 (GIQVGKTYWNRIFL) are Lumenal-facing. A helical membrane pass occupies residues 469-487 (QGWPWVTLSVLGFLYCYSH). Over 488–499 (VDIAWAQTYTVL) the chain is Cytoplasmic.

Belongs to the membrane-bound acyltransferase family. HHAT subfamily.

The protein resides in the endoplasmic reticulum membrane. The protein localises to the golgi apparatus membrane. The enzyme catalyses N-terminal L-cysteinyl-[protein] + hexadecanoyl-CoA = N-terminal N-hexadecanoyl-L-cysteinyl-[protein] + CoA + H(+). It catalyses the reaction N-terminal L-cysteinyl-[protein]-C-terminal glycyl cholesterol ester + hexadecanoyl-CoA = N-terminal N-hexadecanoyl-L-cysteinyl-[protein]-C-terminal glycyl cholesterol ester + CoA + H(+). Its function is as follows. Palmitoyl acyltransferase that catalyzes N-terminal palmitoylation of SHH; which is required for SHH signaling during limb development. It also catalyzes N-terminal palmitoylation of DHH. Promotes the transfer of palmitoyl-CoA from the cytoplasmic to the luminal side of the endoplasmic reticulum membrane, where SHH palmitoylation occurs. Plays a role in proper testis cord formation and the differentiation of Leydig cells. This Mus musculus (Mouse) protein is Protein-cysteine N-palmitoyltransferase HHAT (Hhat).